A 658-amino-acid chain; its full sequence is ATP-dependent RNA helicase MSS116, mitochondrial (658 aa).

Residues 1-35 (MFRVTGIATARAVALQPFRAPLGVIRRFGISATAS) constitute a mitochondrion transit peptide. Residues 40 to 79 (HGHDMQSRNGSRWDSRRQGDRRSSRWEGRGSDREDGERGS) are compositionally biased toward basic and acidic residues. A disordered region spans residues 40–104 (HGHDMQSRNG…DGAAREGFSL (65 aa)). The short motif at 126 to 154 (TLVEEGVLSNELYEMLQSRGFDKLTPVQQ) is the Q motif element. One can recognise a Helicase ATP-binding domain in the interval 158–343 (KPILQTEHDV…NSIMNHAKCL (186 aa)). 171–178 (AKTGTGKT) serves as a coordination point for ATP. Positions 284–287 (DEAD) match the DEAD box motif. Positions 372 to 528 (NITASLYKIR…TFDAAAQELS (157 aa)) constitute a Helicase C-terminal domain.

The protein belongs to the DEAD box helicase family. DDX18/HAS1 subfamily.

It is found in the mitochondrion matrix. It carries out the reaction ATP + H2O = ADP + phosphate + H(+). Its function is as follows. ATP-dependent RNA helicase required for mitochondrial splicing of group I and II introns. Also required for efficient mitochondrial translation. This is ATP-dependent RNA helicase MSS116, mitochondrial (MSS116) from Eremothecium gossypii (strain ATCC 10895 / CBS 109.51 / FGSC 9923 / NRRL Y-1056) (Yeast).